The following is a 5412-amino-acid chain: Mucin-4 (5412 aa).

A signal peptide spans 1–28 (MKGARWRRVPWVSLSCLCLCLLPHVVPG). 2 disordered regions span residues 40 to 87 (TAAP…TTSK) and 142 to 249 (TSTD…ATSS). The tract at residues 43–4241 (PVTSTGSTTA…SVSTGHATPL (4199 aa)) is variable number of tandem repeats (VNTR). The segment covering 142 to 163 (TSTDSTLGNTEETSTAGTESST) has biased composition (low complexity). Threonine 154 and threonine 156 each carry an O-linked (GalNAc...) threonine glycan. A compositionally biased stretch (polar residues) spans 164-199 (PVTSAVSITAGQEGQSRTTSWRTSIQDTSASSQNHW). Residues 200–223 (TRSTQTTRESQTSTLTHRTTSTPS) show a composition bias toward low complexity. Positions 224 to 249 (FSPSVHNVTGTVSQKTSPSGETATSS) are enriched in polar residues. Asparagine 230 carries N-linked (GlcNAc...) asparagine glycosylation. Threonine 234 carries an O-linked (GalNAc...) threonine glycan. A glycan (N-linked (GlcNAc...) asparagine) is linked at asparagine 255. 3 stretches are compositionally biased toward polar residues: residues 267–285 (TTST…SVPV), 306–328 (SPAT…HQTQ), and 358–367 (GFNPSGTVSQ). 16 disordered regions span residues 267-286 (TTST…VPVT), 303-328 (EGQS…HQTQ), 353-383 (LSSP…PSSV), 438-473 (LSPS…SFSP), 488-580 (WPSS…ALLS), 592-853 (TATS…ASAS), 868-963 (VPGT…SGSG), 983-1864 (SSAS…DASS), 1878-2078 (ASSV…TGHA), 2111-2220 (TALH…ASTG), 2232-2814 (SAST…TGHA), 2837-3306 (IPSS…SSVS), 3320-3580 (SAST…VSTG), 3592-3644 (SVST…VSTG), 3656-3756 (SVST…ASTG), and 3769-4223 (VSTG…GHAT). 3 O-linked (GalNAc...) threonine glycosylation sites follow: threonine 364, threonine 369, and threonine 376. Positions 368–383 (ETFPSGETTTSSPSSV) are enriched in low complexity. 3 stretches are compositionally biased toward polar residues: residues 450–459 (AFHTQQSEGA), 488–526 (WPSS…TGTA), and 546–557 (TTYSSHSTTLPK). Composition is skewed to low complexity over residues 558–577 (TTGA…TGEA) and 615–627 (STNH…TSTS). Asparagine 617 is a glycosylation site (N-linked (GlcNAc...) asparagine). 3 O-linked (GalNAc...) threonine glycosylation sites follow: threonine 620, threonine 666, and threonine 688. A compositionally biased stretch (polar residues) spans 628-677 (PQESPAVSQRGHTQAPQTTQESQTTRSVSPMTDTKTVTTPGSSFTASGHS). The segment covering 705–717 (TTQAPTTALQAAP) has biased composition (low complexity). Residues 729–746 (GTSLSKTGALTLANSVVS) are compositionally biased toward polar residues. O-linked (GalNAc...) threonine glycosylation is present at threonine 747. Residues 756–771 (TSASASTSPDTAAAMT) show a composition bias toward low complexity. Polar residues predominate over residues 772 to 789 (HTHQAESTEASGQTQTSE). Over residues 790-828 (PASSGSRTTSAGTATPSSSGASGTTPSGSEGISTSGETT) the composition is skewed to low complexity. 6 O-linked (GalNAc...) threonine glycosylation sites follow: threonine 797, threonine 798, threonine 802, threonine 804, threonine 813, and threonine 814. The segment covering 829-852 (RFSSNPSRDSHTTQSTTELLSASA) has biased composition (polar residues). O-linked (GalNAc...) threonine glycosylation is found at threonine 881, threonine 886, and threonine 892. Low complexity predominate over residues 885 to 903 (PTGQSSPTSPSASPQETAA). Positions 907 to 928 (MAQTQRTRTSRGSDTISLASQA) are enriched in polar residues. Residues 929 to 950 (TDTFSTVPPTPPSITSTGLTSP) are compositionally biased toward low complexity. Residues threonine 931, threonine 934, threonine 938, threonine 943, threonine 945, threonine 948, threonine 952, threonine 954, threonine 1003, threonine 1007, threonine 1012, threonine 1019, threonine 1022, threonine 1023, threonine 1028, threonine 1030, threonine 1035, threonine 1039, threonine 1044, threonine 1051, threonine 1055, threonine 1060, threonine 1062, threonine 1067, threonine 1071, threonine 1076, threonine 1083, threonine 1086, threonine 1087, threonine 1092, threonine 1094, threonine 1099, threonine 1103, threonine 1108, threonine 1110, threonine 1115, threonine 1118, threonine 1119, threonine 1124, threonine 1126, threonine 1131, threonine 1135, threonine 1172, threonine 1179, threonine 1182, threonine 1183, threonine 1188, threonine 1195, threonine 1199, threonine 1204, threonine 1236, threonine 1243, threonine 1246, and threonine 1247 are each glycosylated (O-linked (GalNAc...) threonine). The span at 951-963 (QTETHTLSPSGSG) shows a compositional bias: polar residues. Low complexity predominate over residues 1007–1024 (TPLPVTSPSSVSTGHTTP). Positions 1028-1054 (TDTSSESTGHVTPLPVTSFSSASTGDS) are enriched in polar residues. Positions 1060 to 1086 (TDTSSASTGHVTPLPVTSLSSASTGDT) are enriched in polar residues. Residues 1092-1118 (TDTSSASTGHATSLPVTDTSSVSTGHT) show a composition bias toward polar residues. 2 stretches are compositionally biased toward polar residues: residues 1124 to 1150 (TDTS…TGHT) and 1157 to 1197 (DASS…STGH). Polar residues-rich tracts occupy residues 1204–1213 (TDTSSASTGH) and 1221–1246 (DASS…TGHT). A compositionally biased stretch (polar residues) spans 1252 to 1262 (TDTSSASTGQA). Residues 1263–1279 (TSLLVTDTSSVSTGDTT) are compositionally biased toward low complexity. O-linked (GalNAc...) threonine glycosylation is found at threonine 1278, threonine 1279, threonine 1284, threonine 1286, threonine 1291, threonine 1295, threonine 1300, threonine 1307, threonine 1311, threonine 1316, threonine 1323, threonine 1326, threonine 1332, threonine 1339, threonine 1342, threonine 1343, and threonine 1348. A compositionally biased stretch (polar residues) spans 1281 to 1325 (LPVTSTSSASTGHVTPLHVTSPSSASTGHATPLPVTSLSSASTGD). Positions 1332 to 1342 (TSPSSASTGDT) are enriched in polar residues. Polar residues-rich tracts occupy residues 1349–1358 (DASSVSTGHT) and 1365–1405 (DASS…STGH). Residues threonine 1380, threonine 1387, threonine 1390, threonine 1391, threonine 1396, threonine 1403, threonine 1407, threonine 1412, threonine 1444, threonine 1451, threonine 1454, and threonine 1455 are each glycosylated (O-linked (GalNAc...) threonine). 2 stretches are compositionally biased toward polar residues: residues 1412 to 1421 (TDTSSASTGH) and 1429 to 1454 (DASS…TGHT). Residues 1460–1470 (TDTSSASTGQA) show a composition bias toward polar residues. Low complexity predominate over residues 1471-1487 (TSLLVTDTSSVSTGDTT). Residues threonine 1486, threonine 1487, threonine 1492, threonine 1494, threonine 1499, threonine 1503, threonine 1508, threonine 1515, threonine 1519, threonine 1524, threonine 1531, threonine 1534, threonine 1540, threonine 1547, threonine 1550, threonine 1551, threonine 1556, threonine 1563, threonine 1566, threonine 1567, threonine 1572, threonine 1579, threonine 1582, threonine 1583, threonine 1588, threonine 1590, threonine 1598, threonine 1599, threonine 1604, threonine 1611, threonine 1614, threonine 1615, threonine 1620, threonine 1622, threonine 1627, and threonine 1630 are each glycosylated (O-linked (GalNAc...) threonine). A compositionally biased stretch (polar residues) spans 1489-1533 (LPVTSTSSASTGHVTPLHVTSPSSASTGHATPLPVTSLSSASTGD). The span at 1540-1550 (TSPSSASTGDT) shows a compositional bias: polar residues. A compositionally biased stretch (polar residues) spans 1557–1582 (DASSVSTGHTTPLPVTSPSSASTGHT). The segment covering 1588-1614 (TDTSSASKGDTTPLPVTSPSSASTGHT) has biased composition (polar residues). Over residues 1620 to 1631 (TDTSSASTGDTT) the composition is skewed to low complexity. The span at 1633–1661 (LPVTNASSLSTGHATPLHVTSPSSASTGH) shows a compositional bias: polar residues. Asparagine 1637 is a glycosylation site (N-linked (GlcNAc...) asparagine). 24 O-linked (GalNAc...) threonine glycosylation sites follow: threonine 1659, threonine 1663, threonine 1668, threonine 1670, threonine 1675, threonine 1679, threonine 1716, threonine 1723, threonine 1726, threonine 1727, threonine 1732, threonine 1764, threonine 1766, threonine 1812, threonine 1819, threonine 1822, threonine 1823, threonine 1828, threonine 1835, threonine 1838, threonine 1839, threonine 1844, threonine 1854, and threonine 1855. Low complexity predominate over residues 1668–1679 (TSTSSASTGHAT). 3 stretches are compositionally biased toward polar residues: residues 1701–1741 (DVSS…STGH), 1749–1773 (DASS…STAH), and 1812–1822 (TSPSSASTGDT). Residues 1828–1840 (TDASSASTGDTTS) show a composition bias toward low complexity. 3 stretches are compositionally biased toward polar residues: residues 1841-1864 (LPVT…DASS), 1892-1902 (TDTNSASTGDT), and 1909-1950 (DASS…SGHT). O-linked (GalNAc...) threonine glycans are attached at residues threonine 1931, threonine 1934, threonine 1935, threonine 1940, threonine 1950, threonine 1951, threonine 1956, threonine 1963, threonine 1995, threonine 1999, threonine 2004, threonine 2006, threonine 2015, threonine 2020, threonine 2027, threonine 2030, threonine 2031, threonine 2036, threonine 2038, threonine 2047, threonine 2052, threonine 2062, threonine 2063, threonine 2132, threonine 2137, threonine 2139, threonine 2142, threonine 2143, threonine 2148, threonine 2150, threonine 2155, threonine 2159, threonine 2164, threonine 2180, threonine 2182, threonine 2187, threonine 2191, threonine 2196, threonine 2198, threonine 2203, threonine 2207, threonine 2244, threonine 2254, and threonine 2255. Positions 1957–1981 (DASSVPTGHATSLPVTDASSVSTGH) are enriched in polar residues. Residues 2004–2030 (TDTSSVSTGQATPLPVTSLSSASTGDT) show a composition bias toward polar residues. Over residues 2036–2077 (TDTSSASTGQDTPLPVTSLSSVSTGDTTPLPVTNPSSASTGH) the composition is skewed to polar residues. Over residues 2125-2146 (DTTPLPVTSPSSTSTGDTTPLP) the composition is skewed to low complexity. Residues 2148-2189 (TETSSVSTGHATSLPVTDTSSASTGHATSLPVTDTSSASTGH) are compositionally biased toward polar residues. Polar residues-rich tracts occupy residues 2196-2219 (TDTS…SAST) and 2232-2254 (SAST…TGDT). Residues 2261–2270 (DASSVSTGHA) show a composition bias toward polar residues. Residues 2271–2283 (TSLPVTSLSSVST) are compositionally biased toward low complexity. Residues threonine 2283, threonine 2286, threonine 2287, threonine 2292, threonine 2299, threonine 2303, threonine 2308, threonine 2324, threonine 2331, threonine 2334, threonine 2335, threonine 2340, threonine 2347, threonine 2351, threonine 2356, threonine 2363, threonine 2366, threonine 2367, threonine 2372, threonine 2382, threonine 2383, threonine 2388, threonine 2395, threonine 2398, threonine 2399, and threonine 2406 are each glycosylated (O-linked (GalNAc...) threonine). Residues 2284 to 2301 (GDTTPLPVTSPSSASTGH) show a composition bias toward polar residues. Polar residues predominate over residues 2309 to 2349 (DASSASTGHATPLPVTSLSSASTGDTTPLPVTSPSSASTGH). The span at 2366 to 2399 (TTPLPVTSSSSASSGHTTPLPVTDASSASTGDTT) shows a compositional bias: low complexity. Polar residues-rich tracts occupy residues 2404–2413 (TDTSSASTGH) and 2421–2445 (GLSS…STGH). N-linked (GlcNAc...) asparagine glycosylation occurs at asparagine 2437. Residues threonine 2452, threonine 2454, threonine 2459, threonine 2462, threonine 2463, threonine 2468, threonine 2500, threonine 2507, threonine 2510, threonine 2511, threonine 2516, threonine 2518, threonine 2523, and threonine 2526 are each glycosylated (O-linked (GalNAc...) threonine). Residues 2452–2471 (TSTSSASTGDTTPLPGTDTS) show a composition bias toward low complexity. Positions 2485–2510 (DASSVSTGDTTRLPVTSPSSASTGHT) are enriched in polar residues. Positions 2517 to 2573 (DTPSASTGDTTPLPVTNASSLSTRHATSLHVTSPSSASTGHATSLPVTDTSAASTGH) are enriched in polar residues. Asparagine 2533 carries N-linked (GlcNAc...) asparagine glycosylation. 24 O-linked (GalNAc...) threonine glycosylation sites follow: threonine 2564, threonine 2566, threonine 2571, threonine 2575, threonine 2580, threonine 2582, threonine 2587, threonine 2590, threonine 2591, threonine 2596, threonine 2598, threonine 2619, threonine 2622, threonine 2623, threonine 2628, threonine 2660, threonine 2667, threonine 2670, threonine 2671, threonine 2676, threonine 2683, threonine 2687, threonine 2692, and threonine 2694. Low complexity predominate over residues 2580–2591 (TSTSSASTGDTT). Composition is skewed to polar residues over residues 2597-2637 (DTYS…STGH) and 2645-2691 (DASS…SLPV). Residues 2692–2704 (TDTSSASTGDTTS) show a composition bias toward low complexity. Residues 2705–2723 (LPVTDTSSAYTGDTTSLPV) are compositionally biased toward polar residues. A compositionally biased stretch (low complexity) spans 2724 to 2735 (TDTSSSSTGDTT). 8 O-linked (GalNAc...) threonine glycosylation sites follow: threonine 2740, threonine 2742, threonine 2750, threonine 2751, threonine 2756, threonine 2758, threonine 2763, and threonine 2767. The segment covering 2740-2750 (TETSSVSTGDT) has biased composition (polar residues). A compositionally biased stretch (polar residues) spans 2756-2798 (TDTSSASTGHATPLPVTNTSSVSTGHATPLHVTSPSSASTGHT). Asparagine 2773 is a glycosylation site (N-linked (GlcNAc...) asparagine). 7 O-linked (GalNAc...) threonine glycosylation sites follow: threonine 2779, threonine 2783, threonine 2788, threonine 2795, threonine 2798, threonine 2799, and threonine 2804. Polar residues-rich tracts occupy residues 2805-2814 (DASSVSTGHA) and 2837-2846 (IPSSASSGHT). Residues threonine 2846, threonine 2847, and threonine 2852 are each glycosylated (O-linked (GalNAc...) threonine). A compositionally biased stretch (polar residues) spans 2853–2877 (DASSVSTGHATSLPVTDASSVSTGH). The span at 2895–2907 (TPLPLTSLSSVST) shows a compositional bias: low complexity. 17 O-linked (GalNAc...) threonine glycosylation sites follow: threonine 2910, threonine 2911, threonine 2916, threonine 2918, threonine 2923, threonine 2927, threonine 2932, threonine 2939, threonine 2942, threonine 2943, threonine 2948, threonine 2950, threonine 2955, threonine 2959, threonine 2966, threonine 2971, and threonine 2975. The segment covering 2916–2942 (TDTSSASTGQATPLPVTSLSSVSTGDT) has biased composition (polar residues). Residues 2948–2973 (TDTSSASTGHATSLPVTDTSSASTGH) are compositionally biased toward polar residues. Composition is skewed to polar residues over residues 2980-2989 (TDTSSASTGH) and 3009-3037 (LPVT…STGH). O-linked (GalNAc...) threonine glycosylation is found at threonine 3023, threonine 3028, threonine 3035, and threonine 3039. The span at 3044 to 3069 (TDTSSASTGHANPLHVTSPSSASTGH) shows a compositional bias: polar residues. O-linked (GalNAc...) threonine glycosylation is found at threonine 3071, threonine 3076, threonine 3078, threonine 3083, threonine 3087, threonine 3092, threonine 3099, threonine 3102, threonine 3103, threonine 3108, threonine 3115, threonine 3118, threonine 3119, threonine 3124, threonine 3126, threonine 3131, threonine 3135, threonine 3140, threonine 3142, threonine 3147, threonine 3150, threonine 3151, threonine 3156, threonine 3158, threonine 3163, threonine 3167, threonine 3172, threonine 3179, threonine 3182, threonine 3183, threonine 3188, threonine 3220, threonine 3227, threonine 3230, threonine 3231, threonine 3236, threonine 3243, threonine 3247, threonine 3252, and threonine 3254. A compositionally biased stretch (polar residues) spans 3076 to 3118 (TDTSSASTGHATPLPVTSLSSVSTGDTTPLPVTSPSSASTGHT). The span at 3124–3134 (TDTSSASTGQA) shows a compositional bias: polar residues. The segment covering 3140–3151 (TSTSSASTGDTT) has biased composition (low complexity). 2 stretches are compositionally biased toward polar residues: residues 3156–3197 (TDTS…STGH) and 3205–3251 (DASS…SLPV). The segment covering 3252–3264 (TDTSSASTGDTTS) has biased composition (low complexity). The segment covering 3265-3283 (LPVTDTSSAYTGDTTSLPV) has biased composition (polar residues). The segment covering 3284-3295 (TDTSSSSTGDTT) has biased composition (low complexity). Residues threonine 3294, threonine 3332, threonine 3339, threonine 3342, threonine 3343, threonine 3348, threonine 3350, threonine 3355, and threonine 3359 are each glycosylated (O-linked (GalNAc...) threonine). Polar residues predominate over residues 3320–3337 (SASTGHATPLHVTSPSSA). A compositionally biased stretch (low complexity) spans 3338–3356 (STGDTTPVPVTDTSSVSTG). Composition is skewed to polar residues over residues 3365–3374 (GLSSASTGDT) and 3381–3405 (DISS…STGD). Asparagine 3397 carries an N-linked (GlcNAc...) asparagine glycan. O-linked (GalNAc...) threonine glycosylation is found at threonine 3398, threonine 3403, threonine 3406, threonine 3412, threonine 3419, threonine 3423, threonine 3428, threonine 3430, threonine 3435, threonine 3439, and threonine 3444. Residues 3412-3421 (TSPSSASTGH) show a composition bias toward polar residues. Residues 3428–3471 (TSTSSASTGHATPVPVTSTSSASTGHTTPLPVTDTSSASTGDTT) are compositionally biased toward low complexity. O-linked (GalNAc...) serine glycosylation is present at serine 3445. Threonine 3446, threonine 3451, threonine 3454, threonine 3455, threonine 3460, threonine 3462, threonine 3467, threonine 3470, threonine 3471, threonine 3476, threonine 3483, threonine 3486, threonine 3487, threonine 3492, threonine 3499, threonine 3502, threonine 3504, threonine 3508, threonine 3515, threonine 3519, threonine 3524, threonine 3526, threonine 3531, threonine 3535, threonine 3540, threonine 3547, threonine 3550, threonine 3551, threonine 3556, threonine 3567, threonine 3614, threonine 3615, threonine 3622, threonine 3678, threonine 3679, threonine 3686, threonine 3691, threonine 3695, threonine 3700, threonine 3710, threonine 3711, threonine 3716, threonine 3718, threonine 3723, threonine 3727, threonine 3732, threonine 3739, threonine 3743, threonine 3748, threonine 3780, threonine 3787, threonine 3790, threonine 3791, threonine 3796, threonine 3798, threonine 3803, threonine 3807, threonine 3812, threonine 3822, threonine 3823, threonine 3828, threonine 3835, threonine 3839, threonine 3844, threonine 3851, threonine 3854, threonine 3860, threonine 3867, threonine 3871, threonine 3876, threonine 3883, threonine 3886, threonine 3887, threonine 3892, threonine 3894, threonine 3899, threonine 3903, threonine 3935, threonine 3940, threonine 3942, threonine 3947, threonine 3950, threonine 3951, threonine 3956, threonine 3958, threonine 3963, threonine 3967, threonine 3972, threonine 3979, threonine 3983, threonine 3988, threonine 3990, threonine 3995, threonine 3999, threonine 4004, threonine 4006, threonine 4011, threonine 4015, and threonine 4020 each carry an O-linked (GalNAc...) threonine glycan. Polar residues predominate over residues 3473 to 3486 (LPVTSPSSASTGHT). Residues 3493–3517 (IPSSASTGDTSTLPVTGASSASTGH) show a composition bias toward polar residues. Residues 3524-3550 (TDTSSVSTGHATPLPVTSLSSVSTGDT) show a composition bias toward polar residues. The span at 3557–3580 (DASSASTGQATPLPVTSLSSVSTG) shows a compositional bias: polar residues. Positions 3604 to 3615 (TDTSSASTGDTT) are enriched in low complexity. Positions 3620-3644 (TDTSSASTGQATPLPVTSLSSVSTG) are enriched in polar residues. Over residues 3668-3679 (TDTSSASTGDTT) the composition is skewed to low complexity. The span at 3684-3694 (TDTSSASTGQA) shows a compositional bias: polar residues. Over residues 3710 to 3728 (TTPLPVTSTSSVSTGHVTP) the composition is skewed to low complexity. Over residues 3730–3741 (HVTSPSSASTGH) the composition is skewed to polar residues. Low complexity predominate over residues 3780 to 3791 (TDASSASTGDTT). The segment covering 3796–3822 (TDTSSASTGQATPLPVTSLSSVSTGDT) has biased composition (polar residues). Positions 3860–3869 (TSPSSASTGH) are enriched in polar residues. Over residues 3877-3886 (GLSSASTGDT) the composition is skewed to polar residues. Residues 3892-3901 (TDTSSASTRH) are compositionally biased toward polar residues. The span at 3940 to 3951 (TSTSSASTGDTT) shows a compositional bias: low complexity. A compositionally biased stretch (polar residues) spans 3956–3981 (TDTSSVSTGHATSLPVTSRSSASTGH). Residues 3988-3997 (TDTSSVSTGH) show a composition bias toward polar residues. Low complexity predominate over residues 3999–4011 (TPLPVTSTSSVST). Polar residues predominate over residues 4018–4029 (PVTSPSSASTGH). O-linked (GalNAc...) serine glycosylation is found at serine 4021, serine 4023, serine 4024, and serine 4026. O-linked (GalNAc...) threonine glycosylation is found at threonine 4027, threonine 4031, and threonine 4036. Over residues 4030–4047 (ATPVPVTSTSSASTGDTT) the composition is skewed to low complexity. A glycan (O-linked (GalNAc...) serine) is linked at serine 4037. O-linked (GalNAc...) threonine glycosylation is found at threonine 4038, threonine 4043, threonine 4046, and threonine 4047. Residues 4049–4093 (LPVTNASSLSTGHATPLHVTSPSSASRGDTSTLPVTDASSASTGH) show a composition bias toward polar residues. Asparagine 4053 is a glycosylation site (N-linked (GlcNAc...) asparagine). O-linked (GalNAc...) threonine glycans are attached at residues threonine 4078 and threonine 4084. A compositionally biased stretch (low complexity) spans 4095 to 4107 (TPLPLTSLSSVST). 30 O-linked (GalNAc...) threonine glycosylation sites follow: threonine 4110, threonine 4111, threonine 4116, threonine 4118, threonine 4123, threonine 4127, threonine 4132, threonine 4139, threonine 4142, threonine 4143, threonine 4148, threonine 4158, threonine 4159, threonine 4164, threonine 4171, threonine 4175, threonine 4180, threonine 4182, threonine 4187, threonine 4190, threonine 4191, threonine 4196, threonine 4198, threonine 4203, threonine 4207, threonine 4212, threonine 4214, threonine 4219, threonine 4223, and threonine 4239. Positions 4116–4142 (TDTSSASTGQATPLPVTSLSSVSTGDT) are enriched in polar residues. The span at 4149 to 4173 (IPSSASSGHTTSLPVTDASSVSTGH) shows a compositional bias: polar residues. The segment covering 4180 to 4191 (TSTSSASTGDTT) has biased composition (low complexity). Residues 4196 to 4205 (TDTSSASTGH) show a composition bias toward polar residues. Residues 4212 to 4223 (TDTSSASTGHAT) are compositionally biased toward polar residues. Over residues 4242–4254 (AVSSATSASTVSS) the composition is skewed to low complexity. The segment at 4242–4288 (AVSSATSASTVSSDSPLKMETPGMTTPSLKTDGGRRTATSPPPTTSQ) is disordered. O-linked (GalNAc...) threonine glycosylation is found at threonine 4272, threonine 4278, threonine 4280, threonine 4289, threonine 4293, and threonine 4297. Residues 4397-4552 (PFWDDADFST…GLQFYRLHRE (156 aa)) form the NIDO domain. The AMOP domain occupies 4553–4668 (ERPNYRLECL…YLCALYQQRR (116 aa)). Residues 4680–4880 (QPAWMFGDPH…TWQINGTGLL (201 aa)) form the VWFD domain. 16 N-linked (GlcNAc...) asparagine glycosylation sites follow: asparagine 4715, asparagine 4768, asparagine 4787, asparagine 4796, asparagine 4831, asparagine 4852, asparagine 4875, asparagine 4902, asparagine 4928, asparagine 4946, asparagine 4982, asparagine 4997, asparagine 5045, asparagine 5052, asparagine 5100, and asparagine 5119. Positions 5118 to 5157 (QNQSCPVNYCYNQGHCYISQTLGCQPMCTCPPAFTDSRCF) constitute an EGF-like 1 domain. 3 cysteine pairs are disulfide-bonded: cysteine 5122–cysteine 5133, cysteine 5127–cysteine 5145, and cysteine 5147–cysteine 5156. N-linked (GlcNAc...) asparagine glycans are attached at residues asparagine 5185, asparagine 5192, and asparagine 5292. One can recognise an EGF-like 2 domain in the interval 5321-5360 (VSPCSRGYCDHGGQCQHLPSGPRCSCVSFSIYTAWGEHCE). 3 disulfide bridges follow: cysteine 5324/cysteine 5335, cysteine 5329/cysteine 5344, and cysteine 5346/cysteine 5359. The helical transmembrane segment at 5369 to 5389 (FFGIFFGALGGLLLLGVGTFV) threads the bilayer.

As to quaternary structure, a heterodimeric complex, composed of a mucin-4 alpha chain and a cysteine-rich transmembrane mucin-4 beta chain. Mucin-4 beta chain interacts with ERBB2 via the EGF-like domain 1. In nonpolarized cells, associates with ERBB2 and ERBB3. Post-translationally, proteolytically cleaved into 2 chains, mucin-4 alpha chain and mucin-4 beta chain. Highly O-glycosylated. In terms of processing, is predominantly N-glycosylated. Expressed in the thymus, thyroid, lung, trachea, esophagus, stomach, small intestine, colon, testis, prostate, ovary, uterus, placenta, and mammary and salivary glands. Expressed in carcinomas arising from some of these epithelia, such as lung cancers, squamous cell carcinomas of the upper aerodigestive tract, mammary carcinomas, biliary tract, colon, and cervix cancers. Minimally or not expressed in the normal pancreas or chronic pancreatitis, but is highly expressed in pancreatic tumors and pancreatic tumor cell lines.

It is found in the cell membrane. It localises to the secreted. Functionally, membrane-bound mucin, a family of highly glycosylated proteins that constitute the major component of the mucus, the slimy and viscous secretion covering epithelial surfaces. These glycoproteins play important roles in the protection of the epithelium and are implicated in epithelial renewal and differentiation. Regulates cellular behavior through both anti-adhesive effects on cell-cell and cell-extracellular matrix interactions and its ability to act as an intramembrane ligand for ERBB2. Plays an important role in proliferation and differentiation of epithelial cells by inducing specific phosphorylation of ERBB2. In polarized epithelial cells, segregates ERBB2 and other ERBB receptors and prevents ERBB2 from acting as a coreceptor. The interaction with ERBB2 leads to enhanced expression of CDKN1B. The formation of a MUC4-ERBB2-ERBB3-NRG1 complex leads to down-regulation of CDKN1B, resulting in repression of apoptosis and stimulation of proliferation. Its ability to promote tumor growth may be mainly due to repression of apoptosis as opposed to proliferation. This is Mucin-4 (MUC4) from Homo sapiens (Human).